We begin with the raw amino-acid sequence, 368 residues long: Alanine racemase (368 aa).

Residue K40 is the Proton acceptor; specific for D-alanine of the active site. An N6-(pyridoxal phosphate)lysine modification is found at K40. Residue R134 coordinates substrate. Y263 serves as the catalytic Proton acceptor; specific for L-alanine. M310 provides a ligand contact to substrate.

It belongs to the alanine racemase family. Requires pyridoxal 5'-phosphate as cofactor.

The enzyme catalyses L-alanine = D-alanine. Its pathway is amino-acid biosynthesis; D-alanine biosynthesis; D-alanine from L-alanine: step 1/1. In terms of biological role, catalyzes the interconversion of L-alanine and D-alanine. May also act on other amino acids. This Listeria monocytogenes serovar 1/2a (strain ATCC BAA-679 / EGD-e) protein is Alanine racemase (alr).